Reading from the N-terminus, the 62-residue chain is Alpha-toxin Tf4 (62 aa).

Positions 2 to 62 constitute an LCN-type CS-alpha/beta domain; that stretch reads KEGYPADSKG…SVWDSATNKC (61 aa). 4 disulfide bridges follow: Cys-12–Cys-62, Cys-16–Cys-38, Cys-24–Cys-43, and Cys-28–Cys-45. Position 62 is a cysteine amide (Cys-62).

In terms of tissue distribution, expressed by the venom gland.

The protein localises to the secreted. Functionally, alpha toxins bind voltage-independently at site-3 of sodium channels (Nav) and inhibit the inactivation of the activated channels, thereby blocking neuronal transmission. This toxin is toxic to frogs but non-toxic to insect larvae (T.molitor), mammals (rats) and crustaceans (crabs) at the doses assayed. In Tityus fasciolatus (Central Brazilian scorpion), this protein is Alpha-toxin Tf4.